Here is an 84-residue protein sequence, read N- to C-terminus: Large ribosomal subunit protein bL31B (84 aa).

The protein belongs to the bacterial ribosomal protein bL31 family. Type B subfamily. Part of the 50S ribosomal subunit.

This is Large ribosomal subunit protein bL31B from Parabacteroides distasonis (strain ATCC 8503 / DSM 20701 / CIP 104284 / JCM 5825 / NCTC 11152).